We begin with the raw amino-acid sequence, 348 residues long: Ion-translocating oxidoreductase complex subunit D (348 aa).

Helical transmembrane passes span 20-39 (LMKW…TYFF), 72-91 (ALRD…AIPP), and 120-140 (PFNP…VQMT). FMN phosphoryl threonine is present on Thr187. The next 5 helical transmembrane spans lie at 214-234 (LAGV…LVLI), 241-261 (WHIP…FLMF), 266-286 (TASP…FFIA), 300-320 (LVFG…GGFP), and 321-341 (DGVA…DYYT).

This sequence belongs to the NqrB/RnfD family. In terms of assembly, the complex is composed of six subunits: RnfA, RnfB, RnfC, RnfD, RnfE and RnfG. FMN is required as a cofactor.

It is found in the cell inner membrane. In terms of biological role, part of a membrane-bound complex that couples electron transfer with translocation of ions across the membrane. This chain is Ion-translocating oxidoreductase complex subunit D, found in Vibrio atlanticus (strain LGP32) (Vibrio splendidus (strain Mel32)).